A 233-amino-acid chain; its full sequence is Uridylate kinase (233 aa).

Residue 9 to 10 (GS) participates in ATP binding. G43 is a UMP binding site. ATP-binding residues include G44 and R48. UMP-binding positions include D65 and 113-119 (VTPGQTT). ATP contacts are provided by T139, Y145, and D148.

It belongs to the UMP kinase family. As to quaternary structure, homohexamer.

The protein localises to the cytoplasm. The catalysed reaction is UMP + ATP = UDP + ADP. It functions in the pathway pyrimidine metabolism; CTP biosynthesis via de novo pathway; UDP from UMP (UMPK route): step 1/1. Its activity is regulated as follows. Inhibited by UTP. Its function is as follows. Catalyzes the reversible phosphorylation of UMP to UDP. The polypeptide is Uridylate kinase (Methanosarcina barkeri (strain Fusaro / DSM 804)).